Here is a 394-residue protein sequence, read N- to C-terminus: ATP phosphoribosyltransferase regulatory subunit (394 aa).

This sequence belongs to the class-II aminoacyl-tRNA synthetase family. HisZ subfamily. In terms of assembly, heteromultimer composed of HisG and HisZ subunits.

The protein localises to the cytoplasm. It functions in the pathway amino-acid biosynthesis; L-histidine biosynthesis; L-histidine from 5-phospho-alpha-D-ribose 1-diphosphate: step 1/9. Required for the first step of histidine biosynthesis. May allow the feedback regulation of ATP phosphoribosyltransferase activity by histidine. This chain is ATP phosphoribosyltransferase regulatory subunit, found in Geobacillus thermodenitrificans (strain NG80-2).